The sequence spans 115 residues: Phosphoribosyl-AMP cyclohydrolase (115 aa).

Mg(2+) is bound at residue Asp80. Cys81 serves as a coordination point for Zn(2+). Residues Asp82 and Asp84 each contribute to the Mg(2+) site. Residues Cys97 and Cys104 each coordinate Zn(2+).

Belongs to the PRA-CH family. As to quaternary structure, homodimer. Mg(2+) is required as a cofactor. It depends on Zn(2+) as a cofactor.

The protein localises to the cytoplasm. The catalysed reaction is 1-(5-phospho-beta-D-ribosyl)-5'-AMP + H2O = 1-(5-phospho-beta-D-ribosyl)-5-[(5-phospho-beta-D-ribosylamino)methylideneamino]imidazole-4-carboxamide. The protein operates within amino-acid biosynthesis; L-histidine biosynthesis; L-histidine from 5-phospho-alpha-D-ribose 1-diphosphate: step 3/9. Its function is as follows. Catalyzes the hydrolysis of the adenine ring of phosphoribosyl-AMP. This chain is Phosphoribosyl-AMP cyclohydrolase, found in Mycobacterium sp. (strain MCS).